The following is a 131-amino-acid chain: Hydrogenase maturation factor HypA (131 aa).

Ni(2+) is bound at residue His2. Zn(2+)-binding residues include Cys73, Cys76, Cys105, and Cys108.

Belongs to the HypA/HybF family.

In terms of biological role, involved in the maturation of [NiFe] hydrogenases. Required for nickel insertion into the metal center of the hydrogenase. The protein is Hydrogenase maturation factor HypA of Thermomicrobium roseum (strain ATCC 27502 / DSM 5159 / P-2).